Consider the following 182-residue polypeptide: Ribosome maturation factor RimM (182 aa).

Residues 102-182 form the PRC barrel domain; the sequence is EEGDYYWKDL…TIEVDWDPGF (81 aa).

It belongs to the RimM family. In terms of assembly, binds ribosomal protein uS19.

The protein localises to the cytoplasm. Functionally, an accessory protein needed during the final step in the assembly of 30S ribosomal subunit, possibly for assembly of the head region. Essential for efficient processing of 16S rRNA. May be needed both before and after RbfA during the maturation of 16S rRNA. It has affinity for free ribosomal 30S subunits but not for 70S ribosomes. The chain is Ribosome maturation factor RimM from Salmonella gallinarum (strain 287/91 / NCTC 13346).